A 187-amino-acid chain; its full sequence is Elongation factor P (187 aa).

It belongs to the elongation factor P family.

The protein localises to the cytoplasm. Its pathway is protein biosynthesis; polypeptide chain elongation. Functionally, involved in peptide bond synthesis. Stimulates efficient translation and peptide-bond synthesis on native or reconstituted 70S ribosomes in vitro. Probably functions indirectly by altering the affinity of the ribosome for aminoacyl-tRNA, thus increasing their reactivity as acceptors for peptidyl transferase. The chain is Elongation factor P from Mycobacterium ulcerans (strain Agy99).